We begin with the raw amino-acid sequence, 320 residues long: D-alanine--D-alanine ligase (320 aa).

Positions 101-317 (KMIFQGAGLP…FSELVCKILS (217 aa)) constitute an ATP-grasp domain. 148 to 203 (INQLGLPLIVKPSREGSSFGMTKVEHLDQLDDALKKAWHYDEEILVEKWHFGTELT) is an ATP binding site. Mg(2+)-binding residues include Asp271, Glu284, and Asn286.

This sequence belongs to the D-alanine--D-alanine ligase family. Requires Mg(2+) as cofactor. Mn(2+) serves as cofactor.

It localises to the cytoplasm. It catalyses the reaction 2 D-alanine + ATP = D-alanyl-D-alanine + ADP + phosphate + H(+). It functions in the pathway cell wall biogenesis; peptidoglycan biosynthesis. In terms of biological role, cell wall formation. The polypeptide is D-alanine--D-alanine ligase (Hamiltonella defensa subsp. Acyrthosiphon pisum (strain 5AT)).